A 432-amino-acid polypeptide reads, in one-letter code: 23S rRNA (uracil(1939)-C(5))-methyltransferase RlmD (432 aa).

Residues 10 to 68 (RVTTREIITVTTDGLDAFGQGVARHHGKALFIAGLLPGERAEVVLSEDKKQFARGDVKK) enclose the TRAM domain. [4Fe-4S] cluster contacts are provided by cysteine 81, cysteine 87, cysteine 90, and cysteine 162. S-adenosyl-L-methionine-binding residues include glutamine 265, phenylalanine 294, asparagine 299, glutamate 315, asparagine 342, and aspartate 363. Catalysis depends on cysteine 389, which acts as the Nucleophile.

Belongs to the class I-like SAM-binding methyltransferase superfamily. RNA M5U methyltransferase family. RlmD subfamily.

The catalysed reaction is uridine(1939) in 23S rRNA + S-adenosyl-L-methionine = 5-methyluridine(1939) in 23S rRNA + S-adenosyl-L-homocysteine + H(+). Catalyzes the formation of 5-methyl-uridine at position 1939 (m5U1939) in 23S rRNA. The polypeptide is 23S rRNA (uracil(1939)-C(5))-methyltransferase RlmD (Cronobacter sakazakii (strain ATCC BAA-894) (Enterobacter sakazakii)).